A 159-amino-acid polypeptide reads, in one-letter code: Transmembrane protein 88 (159 aa).

2 helical membrane-spanning segments follow: residues 43-63 and 88-108; these read LLLL…MLGF and FTAL…LALA.

This sequence belongs to the TMEM88 family. In terms of assembly, interacts (via C-terminus) with DVL1.

Its subcellular location is the cell membrane. Functionally, inhibits the Wnt/beta-catenin signaling pathway. Crucial for heart development and acts downstream of GATA factors in the pre-cardiac mesoderm to specify lineage commitment of cardiomyocyte development. The sequence is that of Transmembrane protein 88 (Tmem88) from Mus musculus (Mouse).